Here is an 82-residue protein sequence, read N- to C-terminus: Metallothionein (82 aa).

Residues Cys6, Cys8, Cys11, Cys13, Cys29, Cys33, His37, Cys43, Cys48, and Cys50 each coordinate Cd(2+). Positions 6, 8, and 11 each coordinate Zn(2+). Residues Cys29, Cys33, His37, Cys43, Cys48, and Cys50 each coordinate Zn(2+). The interval 61-82 (ITNNQLDEALEETFPASDPISP) is disordered.

It belongs to the metallothionein superfamily.

In terms of biological role, metallothioneins are small proteins that have a high content of cysteine residues which allow them to bind heavy metal ions through clusters of thiolate bonds. Preferentially, binds four Cd(2+) ions. Also binds three Zn(2+) ions but with less affinity. Required for long-term viability. May play a role in the storage or sequestration of metals when present in excess. The chain is Metallothionein from Pseudomonas fluorescens (strain Q2-87).